The following is a 365-amino-acid chain: tRNA/tmRNA (uracil-C(5))-methyltransferase (365 aa).

S-adenosyl-L-methionine is bound by residues Gln189, Tyr217, Asn222, Glu238, and Asp298. Cys323 acts as the Nucleophile in catalysis. The active-site Proton acceptor is Glu357.

The protein belongs to the class I-like SAM-binding methyltransferase superfamily. RNA M5U methyltransferase family. TrmA subfamily.

The enzyme catalyses uridine(54) in tRNA + S-adenosyl-L-methionine = 5-methyluridine(54) in tRNA + S-adenosyl-L-homocysteine + H(+). The catalysed reaction is uridine(341) in tmRNA + S-adenosyl-L-methionine = 5-methyluridine(341) in tmRNA + S-adenosyl-L-homocysteine + H(+). In terms of biological role, dual-specificity methyltransferase that catalyzes the formation of 5-methyluridine at position 54 (m5U54) in all tRNAs, and that of position 341 (m5U341) in tmRNA (transfer-mRNA). The polypeptide is tRNA/tmRNA (uracil-C(5))-methyltransferase (Saccharophagus degradans (strain 2-40 / ATCC 43961 / DSM 17024)).